Consider the following 338-residue polypeptide: Glycerol-3-phosphate dehydrogenase [NAD(P)+] (338 aa).

Residues S13, W14, and K108 each coordinate NADPH. 3 residues coordinate sn-glycerol 3-phosphate: K108, G139, and S141. A143 contributes to the NADPH binding site. Sn-glycerol 3-phosphate is bound by residues K194, D247, S257, R258, and N259. Catalysis depends on K194, which acts as the Proton acceptor. Residue R258 participates in NADPH binding. NADPH contacts are provided by V282 and E284.

Belongs to the NAD-dependent glycerol-3-phosphate dehydrogenase family.

The protein localises to the cytoplasm. It catalyses the reaction sn-glycerol 3-phosphate + NAD(+) = dihydroxyacetone phosphate + NADH + H(+). The catalysed reaction is sn-glycerol 3-phosphate + NADP(+) = dihydroxyacetone phosphate + NADPH + H(+). Its pathway is membrane lipid metabolism; glycerophospholipid metabolism. In terms of biological role, catalyzes the reduction of the glycolytic intermediate dihydroxyacetone phosphate (DHAP) to sn-glycerol 3-phosphate (G3P), the key precursor for phospholipid synthesis. This Streptococcus agalactiae serotype V (strain ATCC BAA-611 / 2603 V/R) protein is Glycerol-3-phosphate dehydrogenase [NAD(P)+].